Reading from the N-terminus, the 304-residue chain is Glycine--tRNA ligase alpha subunit (304 aa).

Belongs to the class-II aminoacyl-tRNA synthetase family. Tetramer of two alpha and two beta subunits.

It is found in the cytoplasm. It carries out the reaction tRNA(Gly) + glycine + ATP = glycyl-tRNA(Gly) + AMP + diphosphate. This Streptococcus agalactiae serotype III (strain NEM316) protein is Glycine--tRNA ligase alpha subunit.